We begin with the raw amino-acid sequence, 188 residues long: uncharacterized protein (188 aa).

Serine 14 carries the post-translational modification Phosphoserine. The segment at 165 to 188 is disordered; that stretch reads RQAMAAKRNRFRKNVRKLPNKKKH. Positions 171-188 are enriched in basic residues; that stretch reads KRNRFRKNVRKLPNKKKH.

The protein resides in the nucleus. It is found in the nucleolus. This is an uncharacterized protein from Schizosaccharomyces pombe (strain 972 / ATCC 24843) (Fission yeast).